The chain runs to 692 residues: Ena/VASP-like protein (692 aa).

The WH1 domain maps to 1-112 (MSEQSICQAR…NAMLFALNIM (112 aa)). 3 disordered regions span residues 116–310 (DGGP…VQKN), 466–518 (SAAM…YEES), and 531–650 (KLRK…NDVS). Composition is skewed to polar residues over residues 123 to 132 (RQAQNIQNGP) and 159 to 169 (STTVSTLQINV). Residues 214–226 (SSKSTNKSSNRTS) are compositionally biased toward low complexity. A compositionally biased stretch (polar residues) spans 231 to 267 (LQNSHCGSEPSTSQSSAFSPIRPSNGTVSRSIKQISL). Low complexity-rich tracts occupy residues 288–310 (PSLS…VQKN) and 466–479 (SAAM…APAP). A compositionally biased stretch (pro residues) spans 480–506 (ASGPPPPPPPGPPPPSGGTPPPAPPLP). The segment at 522–542 (GLAAALAGAKLRKVQRPEDGS) is EVH2 block A. The interval 522–689 (GLAAALAGAK…DAIRQELSRI (168 aa)) is EVH2. A KLKR motif is present at residues 531–534 (KLRK). The segment at 563-580 (GGLMEEMNKLLAKRRKAA) is EVH2 block B. Residues 597-617 (EDASLSSSPVTRGPTPQNSSD) are compositionally biased toward polar residues. A compositionally biased stretch (basic and acidic residues) spans 618 to 628 (LGKKPWERSNS). Residues 655–689 (DFDRMKQEILEEVVRELHKVKEEIIDAIRQELSRI) are EVH2 block C.

This sequence belongs to the Ena/VASP family. As to expression, during embryonic and tadpole development, expressed in the cement gland, brain, neural tube, myotome and neural placodes, including the otic, lateral line and olfactory placodes. All isoforms show similar spatial expression patterns.

The protein localises to the cytoplasm. It is found in the cytoskeleton. It localises to the stress fiber. The protein resides in the cell projection. Its subcellular location is the lamellipodium. Its function is as follows. Ena/VASP proteins are actin-associated proteins involved in a range of processes dependent on cytoskeleton remodeling and cell polarity such as axon guidance and lamellipodial and filopodial dynamics in migrating cells. Evl enhances actin nucleation and polymerization. The polypeptide is Ena/VASP-like protein (Xenopus laevis (African clawed frog)).